The following is a 556-amino-acid chain: GDP-Man:Man(3)GlcNAc(2)-PP-Dol alpha-1,2-mannosyltransferase (556 aa).

Residues 1–7 are Lumenal-facing; it reads MANGLFT. The chain crosses the membrane as a helical span at residues 8–28; that stretch reads YVAISLFTIGPLLALFIPFVW. Residues 29-184 lie on the Cytoplasmic side of the membrane; it reads RLVGSSLGWY…RWVLASTWPY (156 aa). Residues 64–79 are compositionally biased toward basic and acidic residues; that stretch reads SKSAKGRKAEKEDRDT. The tract at residues 64-86 is disordered; that stretch reads SKSAKGRKAEKEDRDTFNNTEAT. An intramembrane region (helical) is located at residues 185–205; the sequence is FTLAGQSFGSLIMAWDAFSLL. Topologically, residues 206-454 are cytoplasmic; the sequence is VPDIFVDTMG…VGVNGMWNEH (249 aa). An intramembrane region (helical) is located at residues 455-475; the sequence is FGIGVVEYQAAGLISVVHDSG. Topologically, residues 476 to 556 are cytoplasmic; the sequence is GPKLDIVVEV…KAVEKPKSRQ (81 aa).

This sequence belongs to the glycosyltransferase group 1 family. Glycosyltransferase 4 subfamily.

The protein localises to the endoplasmic reticulum membrane. It carries out the reaction an alpha-D-Man-(1-&gt;3)-[alpha-D-Man-(1-&gt;6)]-beta-D-Man-(1-&gt;4)-beta-D-GlcNAc-(1-&gt;4)-alpha-D-GlcNAc-diphospho-di-trans,poly-cis-dolichol + 2 GDP-alpha-D-mannose = an alpha-D-Man-(1-&gt;2)-alpha-D-Man-(1-&gt;2)-alpha-D-Man-(1-&gt;3)-[alpha-D-Man-(1-&gt;6)]-beta-D-Man-(1-&gt;4)-beta-D-GlcNAc-(1-&gt;4)-alpha-D-GlcNAc-diphospho-di-trans,poly-cis-dolichol + 2 GDP + 2 H(+). Its pathway is protein modification; protein glycosylation. Its function is as follows. GDP-Man:Man(3)GlcNAc(2)-PP-Dol alpha-1,2-mannosyltransferase that operates in the biosynthetic pathway of dolichol-linked oligosaccharides, the glycan precursors employed in protein asparagine (N)-glycosylation. The assembly of dolichol-linked oligosaccharides begins on the cytosolic side of the endoplasmic reticulum membrane and finishes in its lumen. The sequential addition of sugars to dolichol pyrophosphate produces dolichol-linked oligosaccharides containing fourteen sugars, including two GlcNAcs, nine mannoses and three glucoses. Once assembled, the oligosaccharide is transferred from the lipid to nascent proteins by oligosaccharyltransferases. Catalyzes, on the cytoplasmic face of the endoplasmic reticulum, the addition of the fourth and fifth mannose residues to the dolichol-linked oligosaccharide chain, to produce Man(5)GlcNAc(2)-PP-dolichol core oligosaccharide. This is GDP-Man:Man(3)GlcNAc(2)-PP-Dol alpha-1,2-mannosyltransferase (alg-11) from Neurospora crassa (strain ATCC 24698 / 74-OR23-1A / CBS 708.71 / DSM 1257 / FGSC 987).